Here is a 270-residue protein sequence, read N- to C-terminus: uncharacterized protein (270 aa).

The region spanning 34–266 (LIARGLTKSY…PDVRRLYLGD (233 aa)) is the ABC transporter domain. Position 66–73 (66–73 (GPNGAGKT)) interacts with ATP.

Belongs to the ABC transporter superfamily.

This is an uncharacterized protein from Rhizobium meliloti (strain 1021) (Ensifer meliloti).